The primary structure comprises 473 residues: Phosphatidylserine synthase 1 (473 aa).

Residues 1–35 (MAACVGSRTLSKDDVNYRLHFRMINEQQVEDITLE) lie on the Cytoplasmic side of the membrane. A helical transmembrane segment spans residues 36 to 56 (FFYRPHTITLLSFTILSLMAF). Over 57–72 (AFTRDDSVPEENIWRG) the chain is Lumenal. A helical transmembrane segment spans residues 73-93 (ILSVIFFFLIISVLAFPNGPF). The Cytoplasmic segment spans residues 94–102 (TRPHPAIWR). The helical transmembrane segment at 103 to 123 (MVFGLSVLYFLFLVFVLFLNF) threads the bilayer. The Lumenal portion of the chain corresponds to 124-186 (EQVKAVMYWL…AMKALLIRSY (63 aa)). The helical transmembrane segment at 187 to 207 (GLCWTISITWELTELFFMHLL) threads the bilayer. The Cytoplasmic portion of the chain corresponds to 208–216 (PNFAECWWD). Residues 217-237 (QVILDILLCNGGGIWLGMVVC) traverse the membrane as a helical segment. The Lumenal portion of the chain corresponds to 238 to 286 (RFLEMRTYHWASFKDIHTTTGKIKRAVLQFTPASWTYVRWFDPKSSFQR). The helical transmembrane segment at 287-307 (VAGIYLFMIIWQLTELNTFFL) threads the bilayer. Topologically, residues 308-319 (KHIFVFQASHPL) are cytoplasmic. Residues 320 to 342 (SWGRILFIGIITAPTVRQYYAYL) traverse the membrane as a helical segment. Residues 343–355 (TDTQCKRVGTQCW) are Lumenal-facing. A helical transmembrane segment spans residues 356-376 (VFGVIAFLEAIVCIKFGQDLF). The Cytoplasmic portion of the chain corresponds to 377 to 380 (SKTQ). The chain crosses the membrane as a helical span at residues 381–401 (ILYVVFWLLCVAFTTFLCLYG). Residues 402–473 (MVWYAEYYGH…SKVTNGIGKK (72 aa)) lie on the Lumenal side of the membrane. The interval 420–473 (EDSPYSPDASWLHSKFSKGADNSPPKHPVNSESHSSRRRNRHSRSKVTNGIGKK) is disordered. The span at 455-464 (SRRRNRHSRS) shows a compositional bias: basic residues.

Belongs to the phosphatidyl serine synthase family.

It is found in the endoplasmic reticulum membrane. The catalysed reaction is a 1,2-diacyl-sn-glycero-3-phosphoethanolamine + L-serine = a 1,2-diacyl-sn-glycero-3-phospho-L-serine + ethanolamine. It carries out the reaction a 1,2-diacyl-sn-glycero-3-phosphocholine + L-serine = a 1,2-diacyl-sn-glycero-3-phospho-L-serine + choline. It functions in the pathway phospholipid metabolism; phosphatidylserine biosynthesis. Its function is as follows. Catalyzes a base-exchange reaction in which the polar head group of phosphatidylethanolamine (PE) or phosphatidylcholine (PC) is replaced by L-serine. Catalyzes mainly the conversion of phosphatidylcholine but also converts, in vitro and to a lesser extent, phosphatidylethanolamine. This chain is Phosphatidylserine synthase 1 (PTDSS1), found in Gallus gallus (Chicken).